The primary structure comprises 177 residues: 3-isopropylmalate dehydratase small subunit 1 (177 aa).

A disordered region spans residues 157–177; the sequence is GRFPGEEPGAEASTETASAAE. Residues 162–177 show a composition bias toward low complexity; the sequence is EEPGAEASTETASAAE.

It belongs to the LeuD family. LeuD type 2 subfamily. In terms of assembly, heterodimer of LeuC and LeuD.

It catalyses the reaction (2R,3S)-3-isopropylmalate = (2S)-2-isopropylmalate. It functions in the pathway amino-acid biosynthesis; L-leucine biosynthesis; L-leucine from 3-methyl-2-oxobutanoate: step 2/4. Functionally, catalyzes the isomerization between 2-isopropylmalate and 3-isopropylmalate, via the formation of 2-isopropylmaleate. This is 3-isopropylmalate dehydratase small subunit 1 (leuD1) from Deinococcus radiodurans (strain ATCC 13939 / DSM 20539 / JCM 16871 / CCUG 27074 / LMG 4051 / NBRC 15346 / NCIMB 9279 / VKM B-1422 / R1).